Consider the following 596-residue polypeptide: Serine/threonine-protein kinase PknH (596 aa).

Topologically, residues 1-373 are cytoplasmic; it reads MSDAQDSRVG…QTPRKTNPWP (373 aa). The Protein kinase domain maps to 16–276; sequence YHLKRLLGRG…DLALAAHEAL (261 aa). ATP is bound by residues 22-30 and K45; that span reads LGRGGMGEV. D139 serves as the catalytic Proton acceptor. T170 is modified (phosphothreonine). Residues 292–368 are disordered; the sequence is QESTLPGTAA…PSPWAQTPRK (77 aa). Pro residues predominate over residues 307-318; sequence PTMPTVTPPPIQ. The chain crosses the membrane as a helical span at residues 374–394; it reads LVAGAAAVVLVLVLGAIGIWI. Residues 395 to 596 are Extracellular-facing; the sequence is ANRPKPVQPP…AKIVDKVNKE (202 aa).

This sequence belongs to the protein kinase superfamily. Ser/Thr protein kinase family. In terms of processing, autophosphorylated on threonine and serine residues.

The protein resides in the cell membrane. It catalyses the reaction L-seryl-[protein] + ATP = O-phospho-L-seryl-[protein] + ADP + H(+). The catalysed reaction is L-threonyl-[protein] + ATP = O-phospho-L-threonyl-[protein] + ADP + H(+). The protein is Serine/threonine-protein kinase PknH (pknH) of Mycobacterium bovis (strain ATCC BAA-935 / AF2122/97).